A 334-amino-acid polypeptide reads, in one-letter code: Ferredoxin--NADP reductase (334 aa).

The FAD site is built by aspartate 32, glutamine 40, tyrosine 45, valine 85, phenylalanine 120, aspartate 287, and threonine 327.

The protein belongs to the ferredoxin--NADP reductase type 2 family. As to quaternary structure, homodimer. It depends on FAD as a cofactor.

The catalysed reaction is 2 reduced [2Fe-2S]-[ferredoxin] + NADP(+) + H(+) = 2 oxidized [2Fe-2S]-[ferredoxin] + NADPH. The sequence is that of Ferredoxin--NADP reductase from Wolbachia pipientis subsp. Culex pipiens (strain wPip).